A 716-amino-acid polypeptide reads, in one-letter code: ATP-dependent DNA helicase DinG (716 aa).

The Helicase ATP-binding domain maps to 17-294 (ALQEQIPDFI…TCMEQFRPKT (278 aa)). 54 to 61 (APTGVGKT) is an ATP binding site. A [4Fe-4S] cluster-binding site is contributed by cysteine 120. The DEAH box motif lies at 131-134 (EPTQ). The [4Fe-4S] cluster site is built by cysteine 194, cysteine 199, and cysteine 205. Positions 248–251 (DEGH) match the DEAH box motif. A Helicase C-terminal domain is found at 487–698 (ALDSPFNHCE…VFPIEQPEVP (212 aa)).

It belongs to the helicase family. DinG subfamily. Type 1 sub-subfamily. Requires [4Fe-4S] cluster as cofactor.

It catalyses the reaction Couples ATP hydrolysis with the unwinding of duplex DNA at the replication fork by translocating in the 5'-3' direction. This creates two antiparallel DNA single strands (ssDNA). The leading ssDNA polymer is the template for DNA polymerase III holoenzyme which synthesizes a continuous strand.. It carries out the reaction ATP + H2O = ADP + phosphate + H(+). In terms of biological role, DNA-dependent ATPase and 5'-3' DNA helicase. Unwinds D-loops, R-loops, forked DNA and G-quadruplex DNA. The chain is ATP-dependent DNA helicase DinG from Shigella flexneri.